We begin with the raw amino-acid sequence, 455 residues long: Alcohol acyl transferase 1 allele GSb (455 aa).

Residues His164 and Asn385 each act as proton acceptor in the active site.

It belongs to the plant acyltransferase family. Expressed at very low levels in the skin of ripe fruit.

Its function is as follows. Involved in the biosynthesis of volatile esters which confer ripe apple fruit flavor. Alcohol acyl transferase that can use a wide range of alcohols as substrate to produce esters. In Malus domestica (Apple), this protein is Alcohol acyl transferase 1 allele GSb.